The following is a 362-amino-acid chain: Peptide chain release factor 2 (362 aa).

Gln-250 is modified (N5-methylglutamine).

It belongs to the prokaryotic/mitochondrial release factor family. Post-translationally, methylated by PrmC. Methylation increases the termination efficiency of RF2.

It localises to the cytoplasm. In terms of biological role, peptide chain release factor 2 directs the termination of translation in response to the peptide chain termination codons UGA and UAA. The sequence is that of Peptide chain release factor 2 from Clostridium perfringens (strain ATCC 13124 / DSM 756 / JCM 1290 / NCIMB 6125 / NCTC 8237 / Type A).